We begin with the raw amino-acid sequence, 73 residues long: Putative antitoxin VapB16 (73 aa).

The protein belongs to the UPF0330 family.

Its function is as follows. Possibly the antitoxin component of a type II toxin-antitoxin (TA) system. Its cognate toxin is VapC16 (Potential). The polypeptide is Putative antitoxin VapB16 (vapB16) (Archaeoglobus fulgidus (strain ATCC 49558 / DSM 4304 / JCM 9628 / NBRC 100126 / VC-16)).